The following is an 801-amino-acid chain: MPLKREDTERALQAMEACQSAGDEGFRTRAERLLTIFQSDLFQALLDIQEFYELTVFENQTAGRALTPGLKYRYHDEETPPLQHSPAHLSTGKSAEMLHLGDSGHAPIDGIHAYTPQMHVSPAKPVLLPSGHAPYYATSTLMNGMDGDVEYEEITLERGNSGLGFSIAGGTDNPHIGDDPSIFITKIIPGGAAAQDGRLRVNDSILFVNDVDVREVTHSFAVEALKEAGPIVRLYVLRHKPSAEKITELKLIKGPKGLGFSIAGGVGNQHVPGDNSIYVTKIIEGGAAHKDGRLQIGDKILAVNNMYLEEVMHEDAVAALKNTGDVVFLRVAKTLHQHHHQDAYNPPDITSSYSPHMDMSDYPQALSPSSPRRYSPIPKGLFLDDDISREPRRVVIHRGSTGLGFNIVGGEDGEGIFISFILAGGAADLSGELRKGDQILSVNGVDLRHATHEQAAAALKNAGQTVTIITQYRPEEYSRFEAKIHDLREQLMNSSLVSAAASLRSGKRSFFIRALFDYDKTADGGFLSQAVSFRFGDVLQVFDCSDEEWWQAGKLAPHGELEETGYIPSKRRVERKEWSRLKTRGREPVSGRSDYIVSYETVTQSEVHYARPVIILGPSKDRVNDDLLSEFPDKFGSCVPHTTRPKREYEMDGRDYHFVSSREQMEKDIQSHRFIEAGQYNSHLYGTSVQSVRQVAEQQGKHCILDVSANAVRRLQAAQLYPIAIFIRPSSLQNVLNISKRLTEEQARRALDRAVKLEQDFIECFSAIVEGESFEEIYHHVKSVIEEQSGPYIWIPARERL.

Residues 4–60 form the L27 domain; the sequence is KREDTERALQAMEACQSAGDEGFRTRAERLLTIFQSDLFQALLDIQEFYELTVFENQ. 2 consecutive PDZ domains span residues 153-240 and 248-335; these read EITL…LRHK and ELKL…AKTL. Residues 339–373 are disordered; sequence HHQDAYNPPDITSSYSPHMDMSDYPQALSPSSPRR. The 82-residue stretch at 393-474 folds into the PDZ 3 domain; that stretch reads RVVIHRGSTG…TVTIITQYRP (82 aa). The region spanning 507–577 is the SH3 domain; the sequence is KRSFFIRALF…PSKRRVERKE (71 aa). The Guanylate kinase-like domain occupies 610–786; that stretch reads ARPVIILGPS…IYHHVKSVIE (177 aa).

The protein belongs to the MAGUK family. In terms of processing, ubiquitinated by MDM2 in response to NMDA receptor activation, leading to proteasome-mediated degradation of DLG4 which is required for AMPA receptor endocytosis. Post-translationally, palmitoylated. Palmitoylation is required for targeting to postsynaptic density, plasma membrane and synapses.

It is found in the cell membrane. The protein resides in the postsynaptic density. It localises to the synapse. Postsynaptic scaffolding protein that plays a critical role in synaptogenesis and synaptic plasticity by providing a platform for the postsynaptic clustering of crucial synaptic proteins. The protein is Disks large homolog 4 (dlg4) of Danio rerio (Zebrafish).